The chain runs to 114 residues: Large ribosomal subunit protein bL20 (114 aa).

Belongs to the bacterial ribosomal protein bL20 family.

Its function is as follows. Binds directly to 23S ribosomal RNA and is necessary for the in vitro assembly process of the 50S ribosomal subunit. It is not involved in the protein synthesizing functions of that subunit. The polypeptide is Large ribosomal subunit protein bL20 (Flavobacterium johnsoniae (strain ATCC 17061 / DSM 2064 / JCM 8514 / BCRC 14874 / CCUG 350202 / NBRC 14942 / NCIMB 11054 / UW101) (Cytophaga johnsonae)).